The following is a 170-amino-acid chain: Urease accessory protein UreE (170 aa).

Residues Gly-144–Asp-170 are disordered. The span at His-146 to His-162 shows a compositional bias: basic and acidic residues.

Belongs to the UreE family.

It localises to the cytoplasm. Involved in urease metallocenter assembly. Binds nickel. Probably functions as a nickel donor during metallocenter assembly. In Brucella anthropi (strain ATCC 49188 / DSM 6882 / CCUG 24695 / JCM 21032 / LMG 3331 / NBRC 15819 / NCTC 12168 / Alc 37) (Ochrobactrum anthropi), this protein is Urease accessory protein UreE.